Here is a 192-residue protein sequence, read N- to C-terminus: E3 ubiquitin-protein ligase RNF185 (192 aa).

Residues 1–27 (MASKGPSASASPENSSAGGPSGSSNGA) show a composition bias toward low complexity. The segment at 1 to 30 (MASKGPSASASPENSSAGGPSGSSNGAGES) is disordered. Residues 1 to 130 (MASKGPSASA…GGFQGFGFGD (130 aa)) are Cytoplasmic-facing. Residues 29–80 (ESGGQDSTFECNICLDTAKDAVISLCGHLFCWPCLHQWLETRPNRQVCPVCK) form a required for ubiquitin ligase activity and protection against ER stress-induced cell death region. Residues 39–80 (CNICLDTAKDAVISLCGHLFCWPCLHQWLETRPNRQVCPVCK) form an RING-type zinc finger. The segment at 90-123 (PLYGRGSTGQQDPREKTPPRPQGQRPEPENRGGF) is disordered. A helical membrane pass occupies residues 131–151 (GGFQMSFGIGAFPFGIFATAF). Topologically, residues 152–171 (NINDGRPPPAVPGTPQYVDE) are mitochondrial intermembrane. A helical membrane pass occupies residues 172–192 (QFLSRLFLFVALVIMFWLLIA).

Interacts with ATG5 and BNIP1. Ubiquitously expressed.

It localises to the mitochondrion outer membrane. It is found in the endoplasmic reticulum membrane. It carries out the reaction S-ubiquitinyl-[E2 ubiquitin-conjugating enzyme]-L-cysteine + [acceptor protein]-L-lysine = [E2 ubiquitin-conjugating enzyme]-L-cysteine + N(6)-ubiquitinyl-[acceptor protein]-L-lysine.. Its pathway is protein modification; protein ubiquitination. Its function is as follows. E3 ubiquitin-protein ligase that regulates selective mitochondrial autophagy by mediating 'Lys-63'-linked polyubiquitination of BNIP1. Acts in the endoplasmic reticulum (ER)-associated degradation (ERAD) pathway, which targets misfolded proteins that accumulate in the endoplasmic reticulum (ER) for ubiquitination and subsequent proteasome-mediated degradation. Protects cells from ER stress-induced apoptosis. Responsible for the cotranslational ubiquitination and degradation of CFTR in the ERAD pathway. Also acts as a regulator of the innate antiviral response by catalyzing 'Lys-27'-linked polyubiquitination of CGAS at 'Lys-173' and 'Lys-384', thereby promoting CGAS cyclic GMP-AMP synthase activity. Preferentially associates with the E2 enzymes UBE2J1 and UBE2J2. This Homo sapiens (Human) protein is E3 ubiquitin-protein ligase RNF185.